A 216-amino-acid polypeptide reads, in one-letter code: MGQKINPLGFRLGTTQSHHSFWFAQPRNFSTGLQEDEKIRNSIKNYIQKNRRISSGFEGIARIRIKKRIDLIQVIIHIGFPNLLIEGRTRGIEELQINVQKEFHFSNRRLKIAITRVEKPYEQANILAEYIALQLKNRVSFRKAMKKAIELTEQTDTKGIQVQIAGRIDGKEIARVEWIREGRVPLQTIRAKIDHCSYTIRTIYGVLGIKIWIFVD.

In terms of domain architecture, KH type-2 spans 43 to 118; it reads IKNYIQKNRR…RLKIAITRVE (76 aa).

The protein belongs to the universal ribosomal protein uS3 family. In terms of assembly, part of the 30S ribosomal subunit.

The protein resides in the plastid. It is found in the chloroplast. The chain is Small ribosomal subunit protein uS3c (rps3) from Dioscorea elephantipes (Elephant's foot yam).